The sequence spans 466 residues: 23S rRNA (uracil(1939)-C(5))-methyltransferase RlmD (466 aa).

The TRAM domain occupies 1-54; sequence MVDVLNIESLDLEARGIAHRDGKVLFVEGALPGERVTVQTVRRKPSYEIAKVEE. The [4Fe-4S] cluster site is built by C67, C73, C76, and C155. S-adenosyl-L-methionine contacts are provided by Q264, F293, N298, E314, N342, and D363. Catalysis depends on C393, which acts as the Nucleophile.

This sequence belongs to the class I-like SAM-binding methyltransferase superfamily. RNA M5U methyltransferase family. RlmD subfamily.

It carries out the reaction uridine(1939) in 23S rRNA + S-adenosyl-L-methionine = 5-methyluridine(1939) in 23S rRNA + S-adenosyl-L-homocysteine + H(+). Catalyzes the formation of 5-methyl-uridine at position 1939 (m5U1939) in 23S rRNA. The chain is 23S rRNA (uracil(1939)-C(5))-methyltransferase RlmD from Bordetella parapertussis (strain 12822 / ATCC BAA-587 / NCTC 13253).